The sequence spans 190 residues: Potassium-transporting ATPase KdpC subunit (190 aa).

A helical transmembrane segment spans residues 10-30 (TFIFLLLITGGVYPLLTTVLG).

This sequence belongs to the KdpC family. The system is composed of three essential subunits: KdpA, KdpB and KdpC.

It localises to the cell inner membrane. In terms of biological role, part of the high-affinity ATP-driven potassium transport (or Kdp) system, which catalyzes the hydrolysis of ATP coupled with the electrogenic transport of potassium into the cytoplasm. This subunit acts as a catalytic chaperone that increases the ATP-binding affinity of the ATP-hydrolyzing subunit KdpB by the formation of a transient KdpB/KdpC/ATP ternary complex. This chain is Potassium-transporting ATPase KdpC subunit, found in Shigella dysenteriae serotype 1 (strain Sd197).